The sequence spans 332 residues: Ornithine carbamoyltransferase, catabolic (332 aa).

Residues Ser60–Thr63, Gln87, Arg111, and His138–Gln141 each bind carbamoyl phosphate. L-ornithine is bound by residues Asn170, Asp230, and Ser234–Met235. Carbamoyl phosphate-binding positions include Cys271–Leu272 and Arg316.

Belongs to the aspartate/ornithine carbamoyltransferase superfamily. OTCase family.

The protein resides in the cytoplasm. It carries out the reaction carbamoyl phosphate + L-ornithine = L-citrulline + phosphate + H(+). The protein operates within amino-acid degradation; L-arginine degradation via ADI pathway; carbamoyl phosphate from L-arginine: step 2/2. Its function is as follows. Reversibly catalyzes the transfer of the carbamoyl group from carbamoyl phosphate (CP) to the N(epsilon) atom of ornithine (ORN) to produce L-citrulline. This chain is Ornithine carbamoyltransferase, catabolic, found in Bacillus cereus (strain ATCC 10987 / NRS 248).